The primary structure comprises 240 residues: Probable septum site-determining protein MinC (240 aa).

Belongs to the MinC family. In terms of assembly, interacts with MinD and FtsZ.

Cell division inhibitor that blocks the formation of polar Z ring septums. Rapidly oscillates between the poles of the cell to destabilize FtsZ filaments that have formed before they mature into polar Z rings. Prevents FtsZ polymerization. In Acinetobacter baylyi (strain ATCC 33305 / BD413 / ADP1), this protein is Probable septum site-determining protein MinC.